Here is a 390-residue protein sequence, read N- to C-terminus: GTPase Obg (390 aa).

One can recognise an Obg domain in the interval 1-159 (MKFVDEASVK…RELRLELLLL (159 aa)). In terms of domain architecture, OBG-type G spans 160-333 (ADVGMLGLPN…LCFKLGEFME (174 aa)). GTP-binding positions include 166–173 (GLPNAGKS), 191–195 (FTTLI), 213–216 (DIPG), 283–286 (NKVD), and 314–316 (SAV). Positions 173 and 193 each coordinate Mg(2+).

This sequence belongs to the TRAFAC class OBG-HflX-like GTPase superfamily. OBG GTPase family. Monomer. Requires Mg(2+) as cofactor.

It is found in the cytoplasm. An essential GTPase which binds GTP, GDP and possibly (p)ppGpp with moderate affinity, with high nucleotide exchange rates and a fairly low GTP hydrolysis rate. Plays a role in control of the cell cycle, stress response, ribosome biogenesis and in those bacteria that undergo differentiation, in morphogenesis control. In Vibrio atlanticus (strain LGP32) (Vibrio splendidus (strain Mel32)), this protein is GTPase Obg.